We begin with the raw amino-acid sequence, 29 residues long: ShK homolog Ask132958 (29 aa).

A ShKT domain is found at 1–29 (CENTISGCSRADCLLTHRKQGCQKTCGLC). Intrachain disulfides connect Cys1–Cys29, Cys8–Cys22, and Cys13–Cys26.

This sequence belongs to the sea anemone type 1 potassium channel toxin family. Type 1a subfamily.

It is found in the secreted. Its subcellular location is the nematocyst. Its function is as follows. This peptide is similar to the potassium channel toxin ShK, but does not show activity on potassium channels. It appears that Lys-19, which is expected to occupy the pore of the channel, is not sufficiently accessible for binding, and therefore that this peptide must have a distinct functional role that does not involve potassium channels. It is noteworthy that this peptide is much more stable in the presence of trypsin, chymotrypsin and pepsin than the toxin ShK. The protein is ShK homolog Ask132958 of Anemonia sulcata (Mediterranean snakelocks sea anemone).